Reading from the N-terminus, the 1533-residue chain is Protein TALPID3 (1533 aa).

The interval 32–57 (LSANKRLPVGTGTSLNGTSRGSSDLT) is disordered. Positions 42-57 (TGTSLNGTSRGSSDLT) are enriched in polar residues. The stretch at 182–223 (QSDLEAKVNSVTELLSKLQETDKHLQRVTEQQTSIQRKQEKL) forms a coiled coil. Residues 309-321 (KEVEDTSFDKQKS) show a composition bias toward basic and acidic residues. Disordered stretches follow at residues 309-339 (KEVE…VSRD) and 377-400 (LTRK…TPEK). A Phosphoserine modification is found at serine 406. Residues 467–501 (SVLKDAEKILRGVQNNKKVLEENLEAIIRAKDGAA) are a coiled coil. The interval 467 to 554 (SVLKDAEKIL…YEQKRFDQKN (88 aa)) is required for centrosomal localization. The tract at residues 546-575 (EQKRFDQKNQRTKKGQNMTKDIRTNTQDKT) is disordered. The span at 560-575 (GQNMTKDIRTNTQDKT) shows a compositional bias: polar residues. Residues threonine 1042 and threonine 1046 each carry the phosphothreonine modification. A Phosphoserine modification is found at serine 1050. Threonine 1063 is modified (phosphothreonine). Serine 1066 is modified (phosphoserine). The disordered stretch occupies residues 1129-1156 (SSPELPKPWGDGDLPLEEENPNSPQEEL).

The protein belongs to the TALPID3 family. As to quaternary structure, interacts with CCP110, CEP290, CEP97, KIF24. As to expression, ubiquitously expressed. Expressed in photoreceptor cells (at protein level).

The protein resides in the cytoplasm. Its subcellular location is the cytoskeleton. It localises to the microtubule organizing center. It is found in the centrosome. The protein localises to the photoreceptor inner segment. The protein resides in the centriole. Its subcellular location is the cilium basal body. Required for ciliogenesis and sonic hedgehog/SHH signaling. Required for the centrosomal recruitment of RAB8A and for the targeting of centriole satellite proteins to centrosomes such as of PCM1. May play a role in early ciliogenesis in the disappearance of centriolar satellites that preceeds ciliary vesicle formation. Involved in regulation of cell intracellular organization. Involved in regulation of cell polarity. Required for asymmetrical localization of CEP120 to daughter centrioles. The chain is Protein TALPID3 (KIAA0586) from Homo sapiens (Human).